The sequence spans 325 residues: tRNA-dihydrouridine(16) synthase (325 aa).

Residues 12 to 14 (PMQ) and Q73 each bind FMN. C103 functions as the Proton donor in the catalytic mechanism. FMN-binding positions include K144, 205–207 (NGE), and 229–230 (GR).

The protein belongs to the Dus family. DusC subfamily. It depends on FMN as a cofactor.

The catalysed reaction is 5,6-dihydrouridine(16) in tRNA + NADP(+) = uridine(16) in tRNA + NADPH + H(+). The enzyme catalyses 5,6-dihydrouridine(16) in tRNA + NAD(+) = uridine(16) in tRNA + NADH + H(+). In terms of biological role, catalyzes the synthesis of 5,6-dihydrouridine (D), a modified base found in the D-loop of most tRNAs, via the reduction of the C5-C6 double bond in target uridines. Specifically modifies U16 in tRNAs. This Haemophilus ducreyi (strain 35000HP / ATCC 700724) protein is tRNA-dihydrouridine(16) synthase.